Consider the following 545-residue polypeptide: Serine/threonine-protein kinase PAK 1 (545 aa).

Residues 1-77 form a disordered region; it reads MSNNGLDIQD…KEKERPEISL (77 aa). The residue at position 2 (Ser2) is an N-acetylserine. Ser21 carries the phosphoserine; by PKB and autocatalysis modification. At Ser57 the chain carries Phosphoserine; by autocatalysis. Positions 68–77 are enriched in basic and acidic residues; that stretch reads KEKERPEISL. The segment at 70 to 140 is autoregulatory region; it reads KERPEISLPS…YNSKKTSNSQ (71 aa). Positions 75-88 constitute a CRIB domain; the sequence is ISLPSDFEHTIHVG. Residues 75–105 form a GTPase-binding region; it reads ISLPSDFEHTIHVGFDAVTGEFTGMPEQWAR. Thr84 is subject to Phosphothreonine; by OXSR1. Ser115 carries the phosphoserine modification. Tyr131 and Tyr142 each carry phosphotyrosine. Ser144 carries the phosphoserine; by autocatalysis modification. At Ser149 the chain carries Phosphoserine. Phosphotyrosine; by JAK2 is present on Tyr153. The disordered stretch occupies residues 159 to 198; it reads LNVKAVSETPAVPPVSEDEDDDDDDATPPPVIAPRPEHTK. Ser174 carries the phosphoserine modification. Residues 174–184 show a composition bias toward acidic residues; sequence SEDEDDDDDDA. Thr185 carries the phosphothreonine modification. Ser199 is modified (phosphoserine; by autocatalysis). Tyr201 is subject to Phosphotyrosine; by JAK2. At Ser204 the chain carries Phosphoserine. The segment at 211–251 is disordered; the sequence is VTPTRDVATSPISPTENNTTPPDALTRNTEKQKKKPKMSDE. Phosphothreonine is present on residues Thr212 and Thr219. Phosphoserine is present on residues Ser220 and Ser223. Positions 220–231 are enriched in polar residues; it reads SPISPTENNTTP. Thr225, Thr229, and Thr230 each carry phosphothreonine. In terms of domain architecture, Protein kinase spans 270–521; sequence YTRFEKIGQG…AKELLQHQFL (252 aa). 276–284 is a binding site for ATP; the sequence is IGQGASGTV. At Tyr285 the chain carries Phosphotyrosine; by JAK2. ATP contacts are provided by residues Lys299 and 345–347; that span reads EYL. Asp389 (proton acceptor) is an active-site residue. At Thr423 the chain carries Phosphothreonine; by autocatalysis, BRSK2 and PDPK1.

It belongs to the protein kinase superfamily. STE Ser/Thr protein kinase family. STE20 subfamily. Homodimer; homodimerization results in autoinhibition. Active as monomer. Interacts with GIT1. Component of cytoplasmic complexes, which also contains PXN, ARHGEF7 and GIT1. Interacts with NISCH. Interacts with DVL1; mediates the formation of a DVL1, MUSK and PAK1 ternary complex involved in AChR clustering. Binds to the caspase-cleaved p110 isoform of CDC2L1 and CDC2L2, p110C, but not the full-length proteins. Interacts with ARHGEF7. Interacts tightly with GTP-bound but not GDP-bound CDC42/P21 and RAC1. Interacts with SCRIB. Interacts with PDPK1. Interacts (via kinase domain) with RAF1. Interacts with NCK1 and NCK2. Interacts with TBCB. Interacts with BRSK2. Interacts with SNAI1. Interacts with CIB1 isoform 2. Interacts with CIB1 (via N-terminal region); the interaction is direct, promotes PAK1 activity and occurs in a calcium-dependent manner. Interacts with INPP5K. Interacts with gamma-tubulin. Interacts with RHOU; the interaction promotes PAK1 activation. Mg(2+) is required as a cofactor. Post-translationally, autophosphorylated in trans, meaning that in a dimer, one kinase molecule phosphorylates the other one. Activated by autophosphorylation at Thr-423 in response to a conformation change, triggered by interaction with GTP-bound CDC42 or RAC1. Activated by phosphorylation at Thr-423 by BRSK2 and by PDPK1. Phosphorylated by JAK2 in response to PRL; this increases PAK1 kinase activity. Phosphorylated at Ser-21 by PKB/AKT; this reduces interaction with NCK1 and association with focal adhesion sites. Upon DNA damage, phosphorylated at Thr-212 and translocates to the nucleoplasm. Phosphorylated at tyrosine residues, which can be enhanced by NTN1. Overexpressed in gastric cancer cells and tissues (at protein level).

It is found in the cytoplasm. The protein localises to the cell junction. Its subcellular location is the focal adhesion. It localises to the cell projection. The protein resides in the lamellipodium. It is found in the cell membrane. The protein localises to the ruffle membrane. Its subcellular location is the invadopodium. It localises to the nucleus. The protein resides in the nucleoplasm. It is found in the chromosome. The protein localises to the cytoskeleton. Its subcellular location is the microtubule organizing center. It localises to the centrosome. The catalysed reaction is L-seryl-[protein] + ATP = O-phospho-L-seryl-[protein] + ADP + H(+). It catalyses the reaction L-threonyl-[protein] + ATP = O-phospho-L-threonyl-[protein] + ADP + H(+). Its activity is regulated as follows. Activated by binding small G proteins. Binding of GTP-bound CDC42 or RAC1 to the autoregulatory region releases monomers from the autoinhibited dimer, and enables activation by phosphorylation of Thr-423. Phosphorylation of Thr-84 by OXSR1 inhibits activation. Functionally, protein kinase involved in intracellular signaling pathways downstream of integrins and receptor-type kinases that plays an important role in cytoskeleton dynamics, in cell adhesion, migration, proliferation, apoptosis, mitosis, and in vesicle-mediated transport processes. Can directly phosphorylate BAD and protects cells against apoptosis. Activated by interaction with CDC42 and RAC1. Functions as a GTPase effector that links the Rho-related GTPases CDC42 and RAC1 to the JNK MAP kinase pathway. Phosphorylates and activates MAP2K1, and thereby mediates activation of downstream MAP kinases. Involved in the reorganization of the actin cytoskeleton, actin stress fibers and of focal adhesion complexes. Phosphorylates the tubulin chaperone TBCB and thereby plays a role in the regulation of microtubule biogenesis and organization of the tubulin cytoskeleton. Plays a role in the regulation of insulin secretion in response to elevated glucose levels. Part of a ternary complex that contains PAK1, DVL1 and MUSK that is important for MUSK-dependent regulation of AChR clustering during the formation of the neuromuscular junction (NMJ). Activity is inhibited in cells undergoing apoptosis, potentially due to binding of CDC2L1 and CDC2L2. Phosphorylates MYL9/MLC2. Phosphorylates RAF1 at 'Ser-338' and 'Ser-339' resulting in: activation of RAF1, stimulation of RAF1 translocation to mitochondria, phosphorylation of BAD by RAF1, and RAF1 binding to BCL2. Phosphorylates SNAI1 at 'Ser-246' promoting its transcriptional repressor activity by increasing its accumulation in the nucleus. In podocytes, promotes NR3C2 nuclear localization. Required for atypical chemokine receptor ACKR2-induced phosphorylation of LIMK1 and cofilin (CFL1) and for the up-regulation of ACKR2 from endosomal compartment to cell membrane, increasing its efficiency in chemokine uptake and degradation. In synapses, seems to mediate the regulation of F-actin cluster formation performed by SHANK3, maybe through CFL1 phosphorylation and inactivation. Plays a role in RUFY3-mediated facilitating gastric cancer cells migration and invasion. In response to DNA damage, phosphorylates MORC2 which activates its ATPase activity and facilitates chromatin remodeling. In neurons, plays a crucial role in regulating GABA(A) receptor synaptic stability and hence GABAergic inhibitory synaptic transmission through its role in F-actin stabilization. In hippocampal neurons, necessary for the formation of dendritic spines and excitatory synapses; this function is dependent on kinase activity and may be exerted by the regulation of actomyosin contractility through the phosphorylation of myosin II regulatory light chain (MLC). Along with GIT1, positively regulates microtubule nucleation during interphase. Phosphorylates FXR1, promoting its localization to stress granules and activity. Phosphorylates ILK on 'Thr-173' and 'Ser-246', promoting nuclear export of ILK. The protein is Serine/threonine-protein kinase PAK 1 of Homo sapiens (Human).